The chain runs to 155 residues: Ribonuclease 8 (155 aa).

The N-terminal stretch at 1 to 28 (MAPARAGCCPLLLLLLLGLWVAEIPVSA) is a signal peptide. 3 disulfides stabilise this stretch: Cys-65/Cys-119, Cys-83/Cys-134, and Cys-90/Cys-97. Residues 66-70 (KDLNT) and Lys-91 each bind substrate. His-150 (proton donor) is an active-site residue.

This sequence belongs to the pancreatic ribonuclease family.

Its subcellular location is the secreted. In terms of biological role, has a low ribonuclease activity. The polypeptide is Ribonuclease 8 (RNASE8) (Saguinus oedipus (Cotton-top tamarin)).